A 788-amino-acid chain; its full sequence is Bifunctional purine biosynthetic protein ADE1 (788 aa).

The interval M1–F429 is GARS. In terms of domain architecture, ATP-grasp spans K114–E323. V140–S201 provides a ligand contact to ATP. Mg(2+) is bound by residues E291 and N293. Positions I439–V752 are AIRS.

In the N-terminal section; belongs to the GARS family. It in the C-terminal section; belongs to the AIR synthase family. Requires Mg(2+) as cofactor. Mn(2+) is required as a cofactor.

The protein localises to the cytoplasm. It is found in the cytosol. It carries out the reaction 5-phospho-beta-D-ribosylamine + glycine + ATP = N(1)-(5-phospho-beta-D-ribosyl)glycinamide + ADP + phosphate + H(+). The catalysed reaction is 2-formamido-N(1)-(5-O-phospho-beta-D-ribosyl)acetamidine + ATP = 5-amino-1-(5-phospho-beta-D-ribosyl)imidazole + ADP + phosphate + H(+). The protein operates within purine metabolism; IMP biosynthesis via de novo pathway; 5-amino-1-(5-phospho-D-ribosyl)imidazole from N(2)-formyl-N(1)-(5-phospho-D-ribosyl)glycinamide: step 2/2. Its pathway is purine metabolism; IMP biosynthesis via de novo pathway; N(1)-(5-phospho-D-ribosyl)glycinamide from 5-phospho-alpha-D-ribose 1-diphosphate: step 2/2. Catalyzes the second and fifth step in the 'de novo' purine biosynthesis pathway; contains phosphoribosylamine--glycine ligase (GARS) and phosphoribosylformylglycinamidine cyclo-ligase (AIRS) activities. The polypeptide is Bifunctional purine biosynthetic protein ADE1 (Yarrowia lipolytica (strain CLIB 122 / E 150) (Yeast)).